The primary structure comprises 597 residues: U3 small nucleolar RNA-associated protein 6 homolog (597 aa).

HAT repeat units follow at residues 121–153, 156–188, 304–335, 488–520, and 524–557; these read ATKTRLSKVFSAMLAIHSNKPALWIMAAKWEME, LSSESARQLFLRALRFHPECPKLYKEYFRMELM, RKEERCCAVYEEAVKTLPTEAMWKCYITFCLE, GGYKKARAVFKSLQESRPFSVDFFRKMIQFEKE, and CNMANIREYYERALREFGSADSDLWMDYMKEELN.

This sequence belongs to the UTP6 family. Part of the small subunit (SSU) processome, composed of more than 70 proteins and the RNA chaperone small nucleolar RNA (snoRNA) U3.

The protein resides in the nucleus. It is found in the nucleolus. Functionally, part of the small subunit (SSU) processome, first precursor of the small eukaryotic ribosomal subunit. During the assembly of the SSU processome in the nucleolus, many ribosome biogenesis factors, an RNA chaperone and ribosomal proteins associate with the nascent pre-rRNA and work in concert to generate RNA folding, modifications, rearrangements and cleavage as well as targeted degradation of pre-ribosomal RNA by the RNA exosome. Involved in nucleolar processing of pre-18S ribosomal RNA. This chain is U3 small nucleolar RNA-associated protein 6 homolog, found in Homo sapiens (Human).